The primary structure comprises 364 residues: Aminomethyltransferase (364 aa).

This sequence belongs to the GcvT family. As to quaternary structure, the glycine cleavage system is composed of four proteins: P, T, L and H.

The catalysed reaction is N(6)-[(R)-S(8)-aminomethyldihydrolipoyl]-L-lysyl-[protein] + (6S)-5,6,7,8-tetrahydrofolate = N(6)-[(R)-dihydrolipoyl]-L-lysyl-[protein] + (6R)-5,10-methylene-5,6,7,8-tetrahydrofolate + NH4(+). Functionally, the glycine cleavage system catalyzes the degradation of glycine. This is Aminomethyltransferase from Escherichia coli O6:H1 (strain CFT073 / ATCC 700928 / UPEC).